The following is a 426-amino-acid chain: MIRSARLISNIKFGQKNIRQFSTNTNWWANVQKGPEDPILGVSIAYNKDTSPSKINLGVGAYRDENGKPYVLDCVKKADKKIYEANVDHEYAPIVGVAAFNQLAAQLALGEECKHIKEKRIATVQSISGTGALRIAADFFARFLKGKTAYVPNPTWGNHNVIFNDAGIPVKSYGYYNPATCGLNFEAMTKDIAAAPEGSIILLHACAHNPTGVDPTAEQWKKISEICKERGHFVLFDFAYQGFASGSPEKDAAAVRMFVEDGHNIALCQSFAKNFGLYGERIGAFSILTETSDQALNVESQLKILIRPMYSNPPVYGARLVQAILKDKELTNEWRSEVKGMADRIINMREQLVKYLKKHGSTRDWSHITTQIGMFCFTGLTPEQVDRLANEYHIYLTRNGRISIAGINSTNVEYLAKAMAAVTKDN.

The transit peptide at 1–29 (MIRSARLISNIKFGQKNIRQFSTNTNWWA) directs the protein to the mitochondrion. Substrate contacts are provided by Gly-60, Trp-156, and Asn-209. N6-(pyridoxal phosphate)lysine is present on Lys-273. Arg-401 contributes to the substrate binding site.

This sequence belongs to the class-I pyridoxal-phosphate-dependent aminotransferase family. In terms of assembly, homodimer. The cofactor is pyridoxal 5'-phosphate.

The protein localises to the mitochondrion matrix. It is found in the cell membrane. It catalyses the reaction L-aspartate + 2-oxoglutarate = oxaloacetate + L-glutamate. The enzyme catalyses L-kynurenine + 2-oxoglutarate = kynurenate + L-glutamate + H2O. Its function is as follows. Plays a key role in amino acid metabolism. Important for metabolite exchange between mitochondria and cytosol. The protein is Aspartate aminotransferase, mitochondrial (aatA) of Dictyostelium discoideum (Social amoeba).